Here is a 1249-residue protein sequence, read N- to C-terminus: MSQLSKNLGDSSPPAEAPKPPVYSRPTVLMRAPPASSRAPPVPWDPPPIDLQASLAAWQAPQPAWEAPQGQLPAPVVPMTQPPALGGPIVPAPPLGGPMGKPPTPGVLMVHPPPPGAPMAQPPTPGVLMVHPSAPGAPMAHPPPPGTPMSHPPPPGTPMAHPPPPGTPMAHPPPPGTPMVHPPPPGTPMAHPPPPGTPMAHPPPPGTPMAHPPPPGTPMAHPPPPGTPMAQPPAPGVLMAQPLTPGVLMVQPAAPGAPMVQPPPAAMMTQPQPSGAPMAKPPGPGVLMIHPPGARAPMTQPPASGAPMAQPAAPPAQPMAPPAQPMASWAPQAQPLILQIQSQVIRAPPQVPQGPQAPPAQLATPPGWQATSPGWQATQQGWQATPLTWQTTQVTWQAPAVTWQVPPPMRQGPPPIRPGPPPIRPGPPPVRQAPPLIRQAPPVIRQAPPVIRQAPPVIRQAPAVIRQAPPVIRQAPPVIRQAPPVIRQAPPLIRQAPPPIRPAPQVLATQPPLWQALPPPPPLRQAPQARLPAPQVQAAPQVPTAPPATQVPAAPPAGPQVPQPVLPAPLSAPLSAPQAVHCPSIIWQAPKGQPPVPHEIPTSMEFQEVQQTQALAWQAQKAPTHIWQPLPAQEAQRQAPPLVQLEQPFQGAPPSQKAVQIQLPPQQAQASGPQAEVPTLPLQPSWQAPPAVLQAQPGPPVAAANFPLGSAKSLMTPSGECRASSIDRRGSSKERRTSSKERRAPSKDRMIFAATFCAPKAVSAARAHLPAAWKNLPATPETFAPSSSVFPATSQFQPASLNAFKGPSAASETPKSLPYALQDPFACVEALPAVPWVPQPNMNASKASQAVPTFLMATAAAPQATATTQEASKTSVEPPRRSGKATRKKKHLEAQEDSRGHTLAFHDWQGPRPWENLNLSDWEVQSPIQVSGDWEHPNTPRGLSGWEGPSTSRILSGWEGPSASWALSAWEGPSTSRALGLSESPGSSLPVVVSEVASVSPGSSATQDNSKVEAQPLSPLDERANALVQFLLVKDQAKVPVQRSEMVKVILREYKDECLDIINRANNKLECAFGYQLKEIDTKNHAYIIINKLGYHTGNLVASYLDRPKFGLLMVVLSLIFMKGNCVREDLIFNFLFKLGLDVRETNGLFGNTKKLITEVFVRQKYLEYRRIPYTEPAEYEFLWGPRAFLETSKMLVLRFLAKLHKKDPQSWPFHYLEALAECEWEDTDEDEPDTGDSAHGPTSRPPPR.

The span at methionine 1–aspartate 10 shows a compositional bias: polar residues. 10 disordered regions span residues methionine 1–aspartate 50, alanine 134–proline 233, glutamine 300–alanine 327, proline 349–threonine 378, arginine 410–alanine 433, glutamine 515–proline 569, glutamine 647–threonine 679, leucine 714–serine 746, proline 862–glycine 910, and valine 930–glycine 957. Composition is skewed to pro residues over residues proline 40–isoleucine 49 and alanine 140–proline 233. Residues proline 301 to proline 311 are compositionally biased toward low complexity. Pro residues-rich tracts occupy residues alanine 312–glutamine 324 and proline 349–proline 358. Positions glutamine 369–threonine 378 are enriched in polar residues. Residues arginine 410–glutamine 432 are compositionally biased toward pro residues. Low complexity predominate over residues glutamine 525–proline 552. The span at alanine 553 to proline 567 shows a compositional bias: pro residues. Over residues glutamine 662–alanine 675 the composition is skewed to low complexity. Positions serine 725–serine 746 are enriched in basic and acidic residues. Residues proline 862 to alanine 871 show a composition bias toward low complexity. Residues arginine 881–histidine 891 show a composition bias toward basic residues. In terms of domain architecture, MAGE spans leucine 1020–alanine 1219. A compositionally biased stretch (acidic residues) spans glutamate 1226–threonine 1235. The tract at residues glutamate 1226 to arginine 1249 is disordered.

Part of a complex consisting of MAGEL2, TRIM27 and USP7; directly interacts with USP7. Interacts with TRIM27. Interacts with VPS35; leading to recruitment at retromer-containing endosomes. Interacts with BMAL1 and PER2. As to expression, expressed in placenta, fetal and adult brain. Not detected in heart and small intestine, very low levels in fibroblasts. Not expressed in brain of a Prader-Willi patient.

It localises to the early endosome. Its subcellular location is the cytoplasm. The protein localises to the nucleus. Functionally, probably enhances ubiquitin ligase activity of RING-type zinc finger-containing E3 ubiquitin-protein ligases, possibly through recruitment and/or stabilization of the Ubl-conjugating enzyme (E2) at the E3:substrate complex. Acts as a regulator of retrograde transport via its interaction with VPS35. Recruited to retromer-containing endosomes and promotes the formation of 'Lys-63'-linked polyubiquitin chains at 'Lys-220' of WASHC1 together with TRIM27, leading to promote endosomal F-actin assembly. Regulates the circadian clock by repressing the transcriptional activator activity of the CLOCK-BMAL1 heterodimer. Significantly promotes the cytoplasmic accumulation of CLOCK. The sequence is that of MAGE-like protein 2 (MAGEL2) from Homo sapiens (Human).